The chain runs to 470 residues: MTIHQSPEAFGYDAFLRTHQSKEVLRFITCGSVDDGKSTLIGRLLHDTKQIFDDQVTALQRDSRKHGTQGAEVDLALLVDGLQAEREQGITIDVAYRFFSTDRRSFIVADTPGHEQYTRNMATGASTADVAVILVDARHGLTRQTRRHALLVSLLGIHRVALAINKMDLVGWSQDKFDAILSGFQAFAAPLNFSEVRAIPLSAKNGDNVVLPGTAATWYDGVPLLRYLEEVPVKSEERAAAFRMPVQWVNRPNSDFRGFSGLIASGSVAPGDAVTVAPSGKTSTVARIFTADGDLERASEGQSVTLVLADEVDASRGAVIATSDAPLTLTDSLDVRLFWAAETDLAPGASLWAKVGTQTVNAVVKAVHRRIDPETGQAGPADKLAVNDIGDVTLTLDRQIAVDPYVENRDTGSLILIDRETTDTAALGLVQTVVAATKAVTPAPTASESKAQEPARSGGLLAGIKRLFGG.

In terms of domain architecture, tr-type G spans 22 to 237; the sequence is KEVLRFITCG…LEEVPVKSEE (216 aa). The segment at 31-38 is G1; the sequence is GSVDDGKS. Position 31 to 38 (31 to 38) interacts with GTP; that stretch reads GSVDDGKS. The interval 89–93 is G2; sequence GITID. The segment at 110–113 is G3; that stretch reads DTPG. GTP is bound by residues 110 to 114 and 165 to 168; these read DTPGH and NKMD. Residues 165 to 168 are G4; that stretch reads NKMD. Residues 202–204 are G5; the sequence is SAK.

This sequence belongs to the TRAFAC class translation factor GTPase superfamily. Classic translation factor GTPase family. CysN/NodQ subfamily. As to quaternary structure, heterodimer composed of CysD, the smaller subunit, and CysN.

It carries out the reaction sulfate + ATP + H(+) = adenosine 5'-phosphosulfate + diphosphate. It participates in sulfur metabolism; hydrogen sulfide biosynthesis; sulfite from sulfate: step 1/3. With CysD forms the ATP sulfurylase (ATPS) that catalyzes the adenylation of sulfate producing adenosine 5'-phosphosulfate (APS) and diphosphate, the first enzymatic step in sulfur assimilation pathway. APS synthesis involves the formation of a high-energy phosphoric-sulfuric acid anhydride bond driven by GTP hydrolysis by CysN coupled to ATP hydrolysis by CysD. The sequence is that of Sulfate adenylyltransferase subunit 1 from Methylorubrum populi (strain ATCC BAA-705 / NCIMB 13946 / BJ001) (Methylobacterium populi).